We begin with the raw amino-acid sequence, 192 residues long: Nucleoside triphosphate pyrophosphatase (192 aa).

The active-site Proton acceptor is D73.

It belongs to the Maf family. A divalent metal cation is required as a cofactor.

The protein resides in the cytoplasm. The catalysed reaction is a ribonucleoside 5'-triphosphate + H2O = a ribonucleoside 5'-phosphate + diphosphate + H(+). The enzyme catalyses a 2'-deoxyribonucleoside 5'-triphosphate + H2O = a 2'-deoxyribonucleoside 5'-phosphate + diphosphate + H(+). Functionally, nucleoside triphosphate pyrophosphatase. May have a dual role in cell division arrest and in preventing the incorporation of modified nucleotides into cellular nucleic acids. This is Nucleoside triphosphate pyrophosphatase from Ehrlichia canis (strain Jake).